A 768-amino-acid chain; its full sequence is cGMP-dependent protein kinase, isozyme 1 (768 aa).

The regulatory stretch occupies residues 1-192 (MAAGMLTDRE…NDFLKNIDAS (192 aa)). Positions 114–127 (PLASTSSASPSGRT) are enriched in low complexity. Residues 114–134 (PLASTSSASPSGRTSADEVRP) form a disordered region. 3',5'-cyclic GMP-binding positions include 249 to 252 (GELA), 259 to 260 (RT), Arg-366, 375 to 378 (GEQA), 385 to 386 (RT), and Tyr-421. In terms of domain architecture, Protein kinase spans 457-717 (LEVVSTLGIG…IQDIKKHKWF (261 aa)). Residues 463-471 (LGIGGFGRV) and Lys-488 contribute to the ATP site. Asp-582 functions as the Proton acceptor in the catalytic mechanism. The AGC-kinase C-terminal domain occupies 718 to 768 (LGFDWDGLASQLLIPPFVRPIAHPTDVRYFDRFPCDLNEPPDELSGWDADF).

This sequence belongs to the protein kinase superfamily. AGC Ser/Thr protein kinase family. cGMP subfamily. As to quaternary structure, homodimer. Requires Mg(2+) as cofactor. Post-translationally, autophosphorylated. As to expression, in embryo stage 13, expression is seen in a few large, irregular cells having the appearance of hemocytes or macrophages. In adults, expression is seen in optic lamina and weakly in testis.

The enzyme catalyses L-seryl-[protein] + ATP = O-phospho-L-seryl-[protein] + ADP + H(+). It carries out the reaction L-threonyl-[protein] + ATP = O-phospho-L-threonyl-[protein] + ADP + H(+). Its activity is regulated as follows. Binding of cGMP results in enzyme activation. The protein is cGMP-dependent protein kinase, isozyme 1 (Pkg21D) of Drosophila melanogaster (Fruit fly).